The chain runs to 373 residues: 3 beta-hydroxysteroid dehydrogenase/Delta 5--&gt;4-isomerase type 4 (373 aa).

Residue Tyr-155 is the Proton acceptor of the active site. An NAD(+)-binding site is contributed by Lys-159. Residues 288 to 308 (LPLLYWLAFLLEIVSFFLHPV) traverse the membrane as a helical segment. At Lys-350 the chain carries N6-acetyllysine.

The protein belongs to the 3-beta-HSD family. As to expression, skin, placenta, also detectable in ovary and adrenal gland.

The protein localises to the endoplasmic reticulum membrane. Its subcellular location is the mitochondrion membrane. The catalysed reaction is a 3beta-hydroxy-Delta(5)-steroid + NAD(+) = a 3-oxo-Delta(5)-steroid + NADH + H(+). It carries out the reaction a 3-oxo-Delta(5)-steroid = a 3-oxo-Delta(4)-steroid. The protein operates within lipid metabolism; steroid biosynthesis. Its function is as follows. 3-beta-HSD is a bifunctional enzyme, that catalyzes the oxidative conversion of Delta(5)-ene-3-beta-hydroxy steroid, and the oxidative conversion of ketosteroids. The 3-beta-HSD enzymatic system plays a crucial role in the biosynthesis of all classes of hormonal steroids. This chain is 3 beta-hydroxysteroid dehydrogenase/Delta 5--&gt;4-isomerase type 4 (Hsd3b6), found in Rattus norvegicus (Rat).